The following is a 437-amino-acid chain: Protein translocase subunit SecY (437 aa).

Helical transmembrane passes span 19–39 (LFTL…APGV), 68–88 (LLQI…SIIL), 121–141 (VALA…GALF), 156–176 (IFTT…VMWL), 188–208 (GMSI…LWAI), 218–238 (WIEF…VVFV), 274–294 (GVIP…IVQF), 317–337 (YIAT…AISF), 378–398 (SLYL…FGGA), and 400–420 (QNFP…LETV).

Belongs to the SecY/SEC61-alpha family. Component of the Sec protein translocase complex. Heterotrimer consisting of SecY, SecE and SecG subunits. The heterotrimers can form oligomers, although 1 heterotrimer is thought to be able to translocate proteins. Interacts with the ribosome. Interacts with SecDF, and other proteins may be involved. Interacts with SecA.

The protein resides in the cell membrane. The central subunit of the protein translocation channel SecYEG. Consists of two halves formed by TMs 1-5 and 6-10. These two domains form a lateral gate at the front which open onto the bilayer between TMs 2 and 7, and are clamped together by SecE at the back. The channel is closed by both a pore ring composed of hydrophobic SecY resides and a short helix (helix 2A) on the extracellular side of the membrane which forms a plug. The plug probably moves laterally to allow the channel to open. The ring and the pore may move independently. This is Protein translocase subunit SecY from Streptomyces griseus.